Consider the following 588-residue polypeptide: Aspartate--tRNA ligase (588 aa).

Glu177 provides a ligand contact to L-aspartate. The interval 201–204 is aspartate; the sequence is QLFK. Arg223 contributes to the L-aspartate binding site. ATP is bound by residues 223 to 225 and Gln232; that span reads RDE. Position 451 (His451) interacts with L-aspartate. Position 485 (Glu485) interacts with ATP. Residue Arg492 coordinates L-aspartate. An ATP-binding site is contributed by 537 to 540; it reads GLDR.

Belongs to the class-II aminoacyl-tRNA synthetase family. Type 1 subfamily. Homodimer.

The protein resides in the cytoplasm. It catalyses the reaction tRNA(Asp) + L-aspartate + ATP = L-aspartyl-tRNA(Asp) + AMP + diphosphate. Functionally, catalyzes the attachment of L-aspartate to tRNA(Asp) in a two-step reaction: L-aspartate is first activated by ATP to form Asp-AMP and then transferred to the acceptor end of tRNA(Asp). The protein is Aspartate--tRNA ligase of Staphylococcus aureus (strain NCTC 8325 / PS 47).